The sequence spans 321 residues: Thylakoid-associated protein sll1697 (321 aa).

It localises to the cellular thylakoid membrane. In Synechocystis sp. (strain ATCC 27184 / PCC 6803 / Kazusa), this protein is Thylakoid-associated protein sll1697.